We begin with the raw amino-acid sequence, 557 residues long: MFSRFSWPRITRCFRSYPKKKSSCISFTHHAREHTNFKKPAVVGASITLMASVALVDFDPVKHAGVSSKRAYRVVLAGFLCFSDYKKVLGSSYASEEERQLALSECHLRCAERSLKVFEENGGIYIKIGQHLSAMGYVIPKEWTNTMVKLQDRCPSTSLKDIDHLFRVDTGKGLDETFDEFDPIALGVASLAQVHKARLKDSDVWVAVKVQHPSVSLNSPLDLSMTRWVFKAIKTFFPDFKLMWLADEIERSLPQELDFTREAKNSIETKEHFAHLSTSLYVPEVMWSKPRILVMEYVAGARIDNLSFMDEHSISRDLVSVDICHIFNEMIFGKGGHLHCDPHGGNVLIRSKPKNSKSPRNYEIVLLDHGLYRDIPHELQVDYANMWLNIINFNEKNLKFYAKKVANVSDENFPIFATAITGRPYKSLKSLPIGGPNHEEEQKKFISALQKGGMLQSIIRLLSTMPRLTLLLMKTNDLVRSLDENLKTKSGPEKLYLIMARYCLRCVYDDKMDSLWNSRSFWVSKVFKGTYYRLSYLFSSLKYTLAENYFYYKHMYL.

A mitochondrion-targeting transit peptide spans 1–33 (MFSRFSWPRITRCFRSYPKKKSSCISFTHHARE). The Mitochondrial matrix segment spans residues 34 to 39 (HTNFKK). Residues 40 to 56 (PAVVGASITLMASVALV) form a helical membrane-spanning segment. Residues 57–557 (DFDPVKHAGV…NYFYYKHMYL (501 aa)) are Mitochondrial intermembrane-facing.

This sequence belongs to the protein kinase superfamily. ADCK protein kinase family.

The protein localises to the mitochondrion inner membrane. Functionally, involved in mitochondrial lipid homeostasis. This is ABC1 family protein MCP2 homolog from Schizosaccharomyces pombe (strain 972 / ATCC 24843) (Fission yeast).